The following is a 203-amino-acid chain: MFIVVEGGEGAGKTQFTQALSKRLMEEGKEVVLTREPGGSALGEQLRDLVLDVTQEISSYAELLLFLAARAQHIQEKILPALESGKTVICDRFHDSTIVYQGIAGGLGEAFVTDLCYRVVGDEPFLPDITFLLDLPEKEGLLRKTRQKNLDRFEQKPTSFHRAAREGFISLAERSPDRYKILDALLPTEVSVDQALLQIRALI.

7–14 is an ATP binding site; it reads GGEGAGKT.

Belongs to the thymidylate kinase family.

It catalyses the reaction dTMP + ATP = dTDP + ADP. Its function is as follows. Phosphorylation of dTMP to form dTDP in both de novo and salvage pathways of dTTP synthesis. This chain is Thymidylate kinase (tmk), found in Chlamydia muridarum (strain MoPn / Nigg).